The sequence spans 159 residues: Cyclic pyranopterin monophosphate synthase (159 aa).

Residues 75-77 (LCH) and 113-114 (ME) each bind substrate. Residue Asp128 is part of the active site.

Belongs to the MoaC family. Homohexamer; trimer of dimers.

It catalyses the reaction (8S)-3',8-cyclo-7,8-dihydroguanosine 5'-triphosphate = cyclic pyranopterin phosphate + diphosphate. The protein operates within cofactor biosynthesis; molybdopterin biosynthesis. Functionally, catalyzes the conversion of (8S)-3',8-cyclo-7,8-dihydroguanosine 5'-triphosphate to cyclic pyranopterin monophosphate (cPMP). The polypeptide is Cyclic pyranopterin monophosphate synthase (Vibrio atlanticus (strain LGP32) (Vibrio splendidus (strain Mel32))).